We begin with the raw amino-acid sequence, 335 residues long: Tetraacyldisaccharide 4'-kinase (335 aa).

58 to 65 (TVGGSGKT) serves as a coordination point for ATP.

This sequence belongs to the LpxK family.

It carries out the reaction a lipid A disaccharide + ATP = a lipid IVA + ADP + H(+). The protein operates within glycolipid biosynthesis; lipid IV(A) biosynthesis; lipid IV(A) from (3R)-3-hydroxytetradecanoyl-[acyl-carrier-protein] and UDP-N-acetyl-alpha-D-glucosamine: step 6/6. Its function is as follows. Transfers the gamma-phosphate of ATP to the 4'-position of a tetraacyldisaccharide 1-phosphate intermediate (termed DS-1-P) to form tetraacyldisaccharide 1,4'-bis-phosphate (lipid IVA). The polypeptide is Tetraacyldisaccharide 4'-kinase (Shewanella sp. (strain ANA-3)).